The following is a 316-amino-acid chain: 4-hydroxy-3-methylbut-2-enyl diphosphate reductase (316 aa).

Position 17 (Cys17) interacts with [4Fe-4S] cluster. (2E)-4-hydroxy-3-methylbut-2-enyl diphosphate is bound by residues His46 and His79. His46 and His79 together coordinate dimethylallyl diphosphate. Residues His46 and His79 each contribute to the isopentenyl diphosphate site. Cys101 serves as a coordination point for [4Fe-4S] cluster. His129 is a (2E)-4-hydroxy-3-methylbut-2-enyl diphosphate binding site. Position 129 (His129) interacts with dimethylallyl diphosphate. His129 serves as a coordination point for isopentenyl diphosphate. Catalysis depends on Glu131, which acts as the Proton donor. Thr170 is a (2E)-4-hydroxy-3-methylbut-2-enyl diphosphate binding site. Residue Cys200 participates in [4Fe-4S] cluster binding. (2E)-4-hydroxy-3-methylbut-2-enyl diphosphate-binding residues include Ser228, Ser229, Asn230, and Ser273. Ser228, Ser229, Asn230, and Ser273 together coordinate dimethylallyl diphosphate. Isopentenyl diphosphate-binding residues include Ser228, Ser229, Asn230, and Ser273.

The protein belongs to the IspH family. [4Fe-4S] cluster serves as cofactor.

The catalysed reaction is isopentenyl diphosphate + 2 oxidized [2Fe-2S]-[ferredoxin] + H2O = (2E)-4-hydroxy-3-methylbut-2-enyl diphosphate + 2 reduced [2Fe-2S]-[ferredoxin] + 2 H(+). The enzyme catalyses dimethylallyl diphosphate + 2 oxidized [2Fe-2S]-[ferredoxin] + H2O = (2E)-4-hydroxy-3-methylbut-2-enyl diphosphate + 2 reduced [2Fe-2S]-[ferredoxin] + 2 H(+). Its pathway is isoprenoid biosynthesis; dimethylallyl diphosphate biosynthesis; dimethylallyl diphosphate from (2E)-4-hydroxy-3-methylbutenyl diphosphate: step 1/1. The protein operates within isoprenoid biosynthesis; isopentenyl diphosphate biosynthesis via DXP pathway; isopentenyl diphosphate from 1-deoxy-D-xylulose 5-phosphate: step 6/6. Functionally, catalyzes the conversion of 1-hydroxy-2-methyl-2-(E)-butenyl 4-diphosphate (HMBPP) into a mixture of isopentenyl diphosphate (IPP) and dimethylallyl diphosphate (DMAPP). Acts in the terminal step of the DOXP/MEP pathway for isoprenoid precursor biosynthesis. The sequence is that of 4-hydroxy-3-methylbut-2-enyl diphosphate reductase from Roseobacter denitrificans (strain ATCC 33942 / OCh 114) (Erythrobacter sp. (strain OCh 114)).